A 523-amino-acid chain; its full sequence is Succinate-semialdehyde dehydrogenase, mitochondrial (523 aa).

A mitochondrion-targeting transit peptide spans 1–35 (MATCFLLRSFWAARPALPPPGRFRPEPAGTPRRSY). Lys-74 is modified (N6-acetyllysine). Lys-114 carries the post-translational modification N6-acetyllysine; alternate. Lys-114 carries the N6-succinyllysine; alternate modification. Position 123 is an N6-succinyllysine (Lys-123). Lys-128 is subject to N6-acetyllysine. Lys-172 bears the N6-succinyllysine mark. Residues Arg-201 and 216 to 219 (KPAE) contribute to the NAD(+) site. Arg-201 lines the substrate pocket. At Lys-253 the chain carries N6-acetyllysine; alternate. N6-succinyllysine; alternate is present on Lys-253. 272–277 (GSTATG) is a binding site for NAD(+). The active-site Proton acceptor is the Glu-294. Substrate is bound at residue Arg-322. Residue Cys-328 is the Nucleophile of the active site. An intrachain disulfide couples Cys-328 to Cys-330. At Lys-347 the chain carries N6-acetyllysine; alternate. Position 347 is an N6-succinyllysine; alternate (Lys-347). Position 353 is an N6-acetyllysine (Lys-353). N6-succinyllysine is present on Lys-390. At Lys-399 the chain carries N6-acetyllysine. At Ser-403 the chain carries Phosphoserine. Position 486 (Ser-486) interacts with substrate. A Phosphoserine modification is found at Ser-487.

This sequence belongs to the aldehyde dehydrogenase family. As to quaternary structure, homotetramer.

The protein localises to the mitochondrion. It carries out the reaction succinate semialdehyde + NAD(+) + H2O = succinate + NADH + 2 H(+). Its pathway is amino-acid degradation; 4-aminobutanoate degradation. Redox-regulated. Inhibited under oxydizing conditions. Its function is as follows. Catalyzes one step in the degradation of the inhibitory neurotransmitter gamma-aminobutyric acid (GABA). The sequence is that of Succinate-semialdehyde dehydrogenase, mitochondrial (Aldh5a1) from Mus musculus (Mouse).